The chain runs to 312 residues: Methionyl-tRNA formyltransferase (312 aa).

Residue 110–113 (SLLP) participates in (6S)-5,6,7,8-tetrahydrofolate binding.

It belongs to the Fmt family.

The catalysed reaction is L-methionyl-tRNA(fMet) + (6R)-10-formyltetrahydrofolate = N-formyl-L-methionyl-tRNA(fMet) + (6S)-5,6,7,8-tetrahydrofolate + H(+). Its function is as follows. Attaches a formyl group to the free amino group of methionyl-tRNA(fMet). The formyl group appears to play a dual role in the initiator identity of N-formylmethionyl-tRNA by promoting its recognition by IF2 and preventing the misappropriation of this tRNA by the elongation apparatus. The chain is Methionyl-tRNA formyltransferase from Mycobacterium marinum (strain ATCC BAA-535 / M).